The sequence spans 929 residues: Band 4.1-like protein 3 (929 aa).

At M1 the chain carries N-acetylmethionine. The disordered stretch occupies residues 1–72 (MTTESGSDSE…STPVKREIGD (72 aa)). At T2 the chain carries N-acetylthreonine; in Band 4.1-like protein 3, N-terminally processed. Positions 20–33 (QEAAGPQGQAGAQP) are enriched in low complexity. S96 is subject to Phosphoserine. An FERM domain is found at 118-399 (MQCKVTLLDG…EHHTFFRLLL (282 aa)). The hydrophilic stretch occupies residues 402–528 (APPKKFLTLG…PVTALRHEGK (127 aa)). Phosphoserine occurs at positions 428, 451, and 486. Residues 490–554 (LITTVTPEKK…TESDQEEDAE (65 aa)) form a disordered region. Phosphothreonine is present on T495. The span at 496 to 516 (PEKKAEEERVEEEDRRKKAEE) shows a compositional bias: basic and acidic residues. At T518 the chain carries Phosphothreonine. Over residues 523–536 (LRHEGKTDSERTDT) the composition is skewed to basic and acidic residues. H525 and S543 each carry phosphoserine. A Phosphothreonine modification is found at T545. S547 carries the phosphoserine modification. Positions 559–602 (DLDKTQDELMKHQTNISELKRTFLETSTETALTNEWEKRLSTSP) are spectrin--actin-binding. 3 disordered regions span residues 608 to 630 (RQED…SGEK), 665 to 689 (LETK…STEK), and 705 to 807 (VHAS…SPGG). T725 is subject to Phosphothreonine. Residues 726–737 (PTDRRHTGKGKE) are compositionally biased toward basic and acidic residues. Residues 777–929 (RTSEGLEQKS…TEITPEDGED (153 aa)) are C-terminal (CTD). Positions 789-802 (ESSTVRVESTSVGS) are enriched in low complexity. 2 positions are modified to phosphoserine: S802 and S804. T923 is subject to Phosphothreonine.

Interacts (via FERM domain) with CADM1. Interacts (via FERM domain) with PRMT3; the interaction is direct and inhibits the protein-arginine N-methyltransferase activity of PRMT3. Interacts with PRMT5. Interacts with PRMT6. As to quaternary structure, has the complete spectrin--actin-binding (SAB) domain and fully interacts with spectrin and actin. Detected in brain (at protein level). Highest expression in brain, lower in testis, adrenal gland, heart and kidney. Also present in muscle and epithelial cells. Isoform 1 is expressed in brain, isoform 2 is expressed in heart and isoform 3 is mostly expressed in kidney but also in heart and brain. Isoform 6 seems to be most abundant in kidney while isoform 4 and isoform 5 are predominantly expressed in heart and brain.

The protein resides in the cytoplasm. It localises to the cytoskeleton. Its subcellular location is the cell membrane. The protein localises to the cell junction. In terms of biological role, tumor suppressor that inhibits cell proliferation and promotes apoptosis. Modulates the activity of protein arginine N-methyltransferases, including PRMT3 and PRMT5. This chain is Band 4.1-like protein 3, found in Mus musculus (Mouse).